Reading from the N-terminus, the 196-residue chain is NAD(P)H-quinone oxidoreductase subunit I (196 aa).

2 4Fe-4S ferredoxin-type domains span residues 54–83 (GRIH…VDWV) and 94–123 (KHYS…VTEE). Residues Cys-63, Cys-66, Cys-69, Cys-73, Cys-103, Cys-106, Cys-109, and Cys-113 each contribute to the [4Fe-4S] cluster site. Residues 174 to 196 (PAGAQRAGERPEAIANTAKSSEN) form a disordered region.

This sequence belongs to the complex I 23 kDa subunit family. In terms of assembly, NDH-1 is composed of at least 11 different subunits. [4Fe-4S] cluster is required as a cofactor.

The protein resides in the cellular thylakoid membrane. The catalysed reaction is a plastoquinone + NADH + (n+1) H(+)(in) = a plastoquinol + NAD(+) + n H(+)(out). It catalyses the reaction a plastoquinone + NADPH + (n+1) H(+)(in) = a plastoquinol + NADP(+) + n H(+)(out). NDH-1 shuttles electrons from an unknown electron donor, via FMN and iron-sulfur (Fe-S) centers, to quinones in the respiratory and/or the photosynthetic chain. The immediate electron acceptor for the enzyme in this species is believed to be plastoquinone. Couples the redox reaction to proton translocation, and thus conserves the redox energy in a proton gradient. The protein is NAD(P)H-quinone oxidoreductase subunit I of Thermosynechococcus vestitus (strain NIES-2133 / IAM M-273 / BP-1).